The following is a 278-amino-acid chain: Release factor glutamine methyltransferase (278 aa).

S-adenosyl-L-methionine-binding positions include 116–120, D139, W168, and N182; that span reads GTGTG. 182–185 lines the substrate pocket; sequence NPPY.

Belongs to the protein N5-glutamine methyltransferase family. PrmC subfamily.

It carries out the reaction L-glutaminyl-[peptide chain release factor] + S-adenosyl-L-methionine = N(5)-methyl-L-glutaminyl-[peptide chain release factor] + S-adenosyl-L-homocysteine + H(+). Its function is as follows. Methylates the class 1 translation termination release factors RF1/PrfA and RF2/PrfB on the glutamine residue of the universally conserved GGQ motif. The polypeptide is Release factor glutamine methyltransferase (Cereibacter sphaeroides (strain ATCC 17023 / DSM 158 / JCM 6121 / CCUG 31486 / LMG 2827 / NBRC 12203 / NCIMB 8253 / ATH 2.4.1.) (Rhodobacter sphaeroides)).